A 603-amino-acid polypeptide reads, in one-letter code: Ribosome-inactivating protein PMRIPt (603 aa).

The first 39 residues, M1–Q39, serve as a signal peptide directing secretion. Residues N74 and N168 are each glycosylated (N-linked (GlcNAc...) asparagine). Residue E208 is part of the active site. Disulfide bonds link C297–C335, C351–C370, and C392–C409. 2 consecutive Ricin B-type lectin domains span residues G338–D466 and V467–M593. Residues D348–S388 form a 1-alpha repeat. N-linked (GlcNAc...) asparagine glycosylation is found at N356 and N408. The 1-beta repeat unit spans residues M389–N430. A 1-gamma repeat occupies S433–D466. Residues K478–V516 form a 2-alpha repeat. 2 disulfides stabilise this stretch: C481–C497 and C523–C540. N488 carries an N-linked (GlcNAc...) asparagine glycan. A 2-beta repeat occupies R520–N558. A 2-gamma repeat occupies A561 to T597.

This sequence belongs to the ribosome-inactivating protein family. Type 2 RIP subfamily. Tetramer of four pairs of disulfide bound A-B chains. In terms of processing, the precursor is processed in two chains, A and B, that are linked by a disulfide bond. Glycosylated. Expressed in rhizome and more abundantly in leaves (at protein level).

It carries out the reaction Endohydrolysis of the N-glycosidic bond at one specific adenosine on the 28S rRNA.. Its activity is regulated as follows. Strongly inhibited by asialofetuin and asialomucin. Functionally, galNAc-specific agglutinin. Behaves as a type-2 ribosome-inactivating protein. Inhibits mammalian ribosomes. The A chain is responsible for inhibiting protein synthesis through the catalytic inactivation of 60S ribosomal subunits by removing adenine from position 4,324 of 28S rRNA. The B chain binds to cell receptors and probably facilitates the entry into the cell of the A chain; B chains are also responsible for cell agglutination (lectin activity). Involved in plant defense against insects. Has very low cytotoxic activity against the human tumor cell lines CEM and Molt4. In Polygonatum multiflorum (Solomon's seal), this protein is Ribosome-inactivating protein PMRIPt.